The following is a 320-amino-acid chain: tRNA pseudouridine synthase B (320 aa).

Asp-41 (nucleophile) is an active-site residue. 2 disordered regions span residues 116 to 136 (PPQV…ARRG) and 259 to 284 (DQCQ…DPSA). Over residues 125–136 (QGERAHARARRG) the composition is skewed to basic and acidic residues. The segment covering 270–284 (SDQQESAPNQTDPSA) has biased composition (polar residues).

The protein belongs to the pseudouridine synthase TruB family. Type 1 subfamily.

The enzyme catalyses uridine(55) in tRNA = pseudouridine(55) in tRNA. Responsible for synthesis of pseudouridine from uracil-55 in the psi GC loop of transfer RNAs. The chain is tRNA pseudouridine synthase B from Prochlorococcus marinus (strain MIT 9313).